A 516-amino-acid chain; its full sequence is uncharacterized protein (516 aa).

9 consecutive transmembrane segments (helical) span residues 183–203 (SAADLPIWEAASGAVLVGDGV), 261–281 (VLKTTFGFLAFGLIVSATYII), 308–328 (VMNGFLACLVMLATGIGTALL), 329–349 (LDHQFALVASVYLALTLAYSF), 356–376 (LLDVTVIGALFTLRIVMGQVL), 379–399 (LAFSPWLFSFSVMFFISLALA), 430–450 (LGHGLASASASIVIMLLFLAL), 461–481 (PAWLYVAPLGVSIWLQRIWLL), and 492–512 (IVFALNDKTSWFIGALIASAF).

It localises to the cell membrane. Functionally, possible permease/transporter. This is an uncharacterized protein from Sinorhizobium fredii (strain NBRC 101917 / NGR234).